The primary structure comprises 451 residues: Probable plasmid replicative DNA helicase (451 aa).

Residues Gln194–Trp451 form the SF4 helicase domain. Ala225–Thr232 contacts ATP.

Belongs to the helicase family. DnaB subfamily. As to quaternary structure, homohexamer.

It catalyses the reaction Couples ATP hydrolysis with the unwinding of duplex DNA at the replication fork by translocating in the 5'-3' direction. This creates two antiparallel DNA single strands (ssDNA). The leading ssDNA polymer is the template for DNA polymerase III holoenzyme which synthesizes a continuous strand.. The enzyme catalyses ATP + H2O = ADP + phosphate + H(+). Its function is as follows. A replicative DNA helicase, it participates in initiation and elongation during DNA replication. Travels ahead of the DNA replisome, separating dsDNA into templates for DNA synthesis. A processive ATP-dependent 5'-3' DNA helicase it has DNA-dependent ATPase activity. The plasmid this protein is encoded on is thought to be required for growth within mammalian cells. This is Probable plasmid replicative DNA helicase from Chlamydia trachomatis serovar L2 (strain ATCC VR-902B / DSM 19102 / 434/Bu).